A 229-amino-acid polypeptide reads, in one-letter code: Nectarin-1 (229 aa).

A signal peptide spans 1 to 32 (MAAFGIKSKIFQIMEMTILFLFAISIDRYCFA). The cysteines at positions 42 and 57 are disulfide-linked. N-linked (GlcNAc...) asparagine glycosylation occurs at asparagine 60. The Cupin type-1 domain occupies 69 to 217 (FAISKPGATN…TFQINIEDVQ (149 aa)). Mn(2+) is bound by residues histidine 117, histidine 119, glutamate 124, and histidine 163.

It belongs to the germin family. Monomer. In the absence of manganese, it forms tetrameric and pentameric forms which show superoxide dismutase activity. Mn(2+) is required as a cofactor. Post-translationally, glycosylated.

The protein resides in the secreted. It localises to the extracellular space. It is found in the apoplast. It catalyses the reaction 2 superoxide + 2 H(+) = H2O2 + O2. Its function is as follows. May interact with bacterial adhesins thereby protecting the reproductive tissues from microbial attack. Has no oxalate oxidase activity. The chain is Nectarin-1 (NEC1) from Nicotiana plumbaginifolia (Leadwort-leaved tobacco).